The chain runs to 178 residues: Transcriptional repressor NrdR (178 aa).

The disordered stretch occupies residues 1 to 21 (MRCPFCGHEDTQVKDSRPHED). A zinc finger lies at 3–34 (CPFCGHEDTQVKDSRPHEDGAAIRRRRICAAC). Over residues 7–21 (GHEDTQVKDSRPHED) the composition is skewed to basic and acidic residues. Residues 49-139 (LYVVKADDRR…VHWDFRETKD (91 aa)) form the ATP-cone domain.

This sequence belongs to the NrdR family. The cofactor is Zn(2+).

Functionally, negatively regulates transcription of bacterial ribonucleotide reductase nrd genes and operons by binding to NrdR-boxes. The sequence is that of Transcriptional repressor NrdR from Gluconacetobacter diazotrophicus (strain ATCC 49037 / DSM 5601 / CCUG 37298 / CIP 103539 / LMG 7603 / PAl5).